An 86-amino-acid polypeptide reads, in one-letter code: Small ribosomal subunit protein bS20 (86 aa).

A compositionally biased stretch (basic residues) spans 1 to 11; it reads MANIKSAKKRA. The tract at residues 1-26 is disordered; the sequence is MANIKSAKKRAITSEKNRQHNASRRS.

It belongs to the bacterial ribosomal protein bS20 family.

Functionally, binds directly to 16S ribosomal RNA. This is Small ribosomal subunit protein bS20 from Pseudoalteromonas translucida (strain TAC 125).